Consider the following 222-residue polypeptide: Uracil-DNA glycosylase (222 aa).

Asp61 serves as the catalytic Proton acceptor.

It belongs to the uracil-DNA glycosylase (UDG) superfamily. UNG family.

It is found in the cytoplasm. It carries out the reaction Hydrolyzes single-stranded DNA or mismatched double-stranded DNA and polynucleotides, releasing free uracil.. In terms of biological role, excises uracil residues from the DNA which can arise as a result of misincorporation of dUMP residues by DNA polymerase or due to deamination of cytosine. In Actinobacillus succinogenes (strain ATCC 55618 / DSM 22257 / CCUG 43843 / 130Z), this protein is Uracil-DNA glycosylase.